The sequence spans 326 residues: Apoptosis facilitator Bcl-2-like protein 14 (326 aa).

A Phosphoserine modification is found at Ser-44. Residues 100–147 (AEKEEDSQSSPPEICAQAQRSGVPQARPRSPKWPRSRSSMDQRLEHKA) form a disordered region. A compositionally biased stretch (basic and acidic residues) spans 137-147 (SSMDQRLEHKA). A BH3 motif is present at residues 211 to 225 (IVELLKYSGEQLERE). Residues 307–314 (WIQQHGGW) carry the BH2 motif.

Belongs to the Bcl-2 family. Post-translationally, phosphorylated by MELK, leading to inhibit its pro-apoptotic function.

Its subcellular location is the cytoplasm. Functionally, plays a role in apoptosis. This is Apoptosis facilitator Bcl-2-like protein 14 (BCL2L14) from Bos taurus (Bovine).